Consider the following 295-residue polypeptide: Ribosomal RNA small subunit methyltransferase A (295 aa).

S-adenosyl-L-methionine-binding residues include N31, L33, G58, E79, D104, and N129.

The protein belongs to the class I-like SAM-binding methyltransferase superfamily. rRNA adenine N(6)-methyltransferase family. RsmA subfamily.

The protein localises to the cytoplasm. It catalyses the reaction adenosine(1518)/adenosine(1519) in 16S rRNA + 4 S-adenosyl-L-methionine = N(6)-dimethyladenosine(1518)/N(6)-dimethyladenosine(1519) in 16S rRNA + 4 S-adenosyl-L-homocysteine + 4 H(+). Specifically dimethylates two adjacent adenosines (A1518 and A1519) in the loop of a conserved hairpin near the 3'-end of 16S rRNA in the 30S particle. May play a critical role in biogenesis of 30S subunits. This is Ribosomal RNA small subunit methyltransferase A from Leuconostoc citreum (strain KM20).